The following is a 1049-amino-acid chain: Toll-like receptor 7 (1049 aa).

The first 26 residues, 1–26 (MVFPMWTLKRQILILFNIILISKLLG), serve as a signal peptide directing secretion. The Extracellular segment spans residues 27–839 (ARWFPKTLPC…LYTCELDLTN (813 aa)). LRR repeat units lie at residues 43-64 (PKNH…GGIP), 65-87 (TNTT…SFHR), 110-126 (NMCI…FSGL), 127-149 (TYLK…LPPS), 151-170 (QLLS…NLTE), and 171-195 (LANI…SYSI). N-linked (GlcNAc...) asparagine glycans are attached at residues asparagine 66 and asparagine 69. Asparagine 167 carries N-linked (GlcNAc...) asparagine glycosylation. 2 N-linked (GlcNAc...) asparagine glycosylation sites follow: asparagine 202 and asparagine 215. LRR repeat units follow at residues 203–226 (LTKL…LPST), 228–247 (TELY…DFNN), 248–275 (LNQL…PCKN), 289–312 (LTEL…WFKN), 314–337 (NKLQ…KFLH), 339–368 (LPSL…AFSS), 369–392 (LKSL…NLSP), 396–419 (LQNL…MFKQ), and 421–443 (KRLK…SEVG). A glycan (N-linked (GlcNAc...) asparagine) is linked at asparagine 361. Asparagine 413 carries N-linked (GlcNAc...) asparagine glycosylation. An N-linked (GlcNAc...) asparagine glycan is attached at asparagine 488. LRR repeat units follow at residues 492–515 (YKYG…DFQH), 516–540 (LSFL…EFQP), 541–564 (LAEL…AFEE), and 566–588 (HKLE…ITHM). N-linked (GlcNAc...) asparagine glycosylation is found at asparagine 523 and asparagine 534. An N-linked (GlcNAc...) asparagine glycan is attached at asparagine 590. LRR repeat units follow at residues 595-618 (LKVL…TMES), 619-644 (ESLR…RYLQ), 649-672 (LLKL…VFDG), 674-697 (PPNL…KLQC), 698-721 (LKNL…LSNC), 723-745 (RSLK…FLQD), 746-769 (AFQL…SFPE), and 772-795 (LNNL…VWFV). N-linked (GlcNAc...) asparagine glycans are attached at residues asparagine 679 and asparagine 720. N-linked (GlcNAc...) asparagine glycosylation is present at asparagine 799. Residues 840–860 (LILFSLSISVSLFLMVMMTAS) traverse the membrane as a helical segment. At 861 to 1049 (HLYFWDVWYI…AYSQVFKETV (189 aa)) the chain is on the cytoplasmic side. Residues 889 to 1033 (CCYDAFIVYD…YFWQCLKNAL (145 aa)) form the TIR domain.

Belongs to the Toll-like receptor family. Homodimer. Interacts with MYD88 via their respective TIR domains. Interacts with UNC93B1. Interacts with SMPDL3B. In terms of tissue distribution, detected in brain, placenta, spleen, stomach, small intestine, lung and in plasmacytoid pre-dendritic cells. Expressed in peripheral mononuclear blood cells.

Its subcellular location is the endoplasmic reticulum membrane. It localises to the endosome. The protein resides in the lysosome. It is found in the cytoplasmic vesicle. The protein localises to the phagosome. Its activity is regulated as follows. Activated by guanosine analogs including deoxyguanosine, 7-thia-8-oxoguanosine or 7-deazaguanosine in a RNA-independent manner. Activated by imiquimod. Its function is as follows. Endosomal receptor that plays a key role in innate and adaptive immunity. Controls host immune response against pathogens through recognition of uridine-containing single strand RNAs (ssRNAs) of viral origin or guanosine analogs. Upon binding to agonists, undergoes dimerization that brings TIR domains from the two molecules into direct contact, leading to the recruitment of TIR-containing downstream adapter MYD88 through homotypic interaction. In turn, the Myddosome signaling complex is formed involving IRAK4, IRAK1, TRAF6, TRAF3 leading to activation of downstream transcription factors NF-kappa-B and IRF7 to induce pro-inflammatory cytokines and interferons, respectively. In plasmacytoid dendritic cells, RNASET2 endonuclease cooperates with PLD3 or PLD4 5'-&gt;3' exonucleases to process RNA and release 2',3'-cyclic guanosine monophosphate (2',3'-cGMP) and cytidine-rich RNA fragments that occupy TLR7 ligand-binding pockets and trigger a signaling-competent state. In Homo sapiens (Human), this protein is Toll-like receptor 7.